We begin with the raw amino-acid sequence, 405 residues long: Acetate kinase (405 aa).

Position 7 (Asn7) interacts with Mg(2+). Lys14 contributes to the ATP binding site. Residue Arg91 coordinates substrate. The Proton donor/acceptor role is filled by Asp148. ATP-binding positions include His208–Gly212 and Asp283–Arg285. Glu384 is a Mg(2+) binding site.

It belongs to the acetokinase family. As to quaternary structure, homodimer. Mg(2+) is required as a cofactor. Mn(2+) serves as cofactor.

The protein localises to the cytoplasm. It catalyses the reaction acetate + ATP = acetyl phosphate + ADP. Its pathway is metabolic intermediate biosynthesis; acetyl-CoA biosynthesis; acetyl-CoA from acetate: step 1/2. Functionally, catalyzes the formation of acetyl phosphate from acetate and ATP. Can also catalyze the reverse reaction. This Dictyoglomus turgidum (strain DSM 6724 / Z-1310) protein is Acetate kinase.